The sequence spans 223 residues: Protein SCM3 (223 aa).

Residues 1–14 (MKTNKKISKRRSLK) show a composition bias toward basic residues. 2 disordered regions span residues 1-48 (MKTN…HRVY) and 168-202 (EDGD…EKDE). Over residues 23–40 (LLKESGKKSESKIRKHSD) the composition is skewed to basic and acidic residues. Acidic residues predominate over residues 184-200 (EASDSEVDADNDTEEEK).

Interacts with YTA7.

The protein localises to the nucleus. Centromeric protein that plays a central role in the incorporation and maintenance of histone H3-like variant CENPA at centromeres. This Saccharomyces cerevisiae (strain ATCC 204508 / S288c) (Baker's yeast) protein is Protein SCM3 (SCM3).